The following is a 258-amino-acid chain: Leucyl/phenylalanyl-tRNA--protein transferase (258 aa).

Positions 199-220 are disordered; that stretch reads GGSDGPAPDQSIGMSSSGGVSD. The segment covering 209–220 has biased composition (low complexity); sequence SIGMSSSGGVSD.

The protein belongs to the L/F-transferase family.

It localises to the cytoplasm. It catalyses the reaction N-terminal L-lysyl-[protein] + L-leucyl-tRNA(Leu) = N-terminal L-leucyl-L-lysyl-[protein] + tRNA(Leu) + H(+). The enzyme catalyses N-terminal L-arginyl-[protein] + L-leucyl-tRNA(Leu) = N-terminal L-leucyl-L-arginyl-[protein] + tRNA(Leu) + H(+). It carries out the reaction L-phenylalanyl-tRNA(Phe) + an N-terminal L-alpha-aminoacyl-[protein] = an N-terminal L-phenylalanyl-L-alpha-aminoacyl-[protein] + tRNA(Phe). Its function is as follows. Functions in the N-end rule pathway of protein degradation where it conjugates Leu, Phe and, less efficiently, Met from aminoacyl-tRNAs to the N-termini of proteins containing an N-terminal arginine or lysine. The chain is Leucyl/phenylalanyl-tRNA--protein transferase from Hyphomonas neptunium (strain ATCC 15444).